We begin with the raw amino-acid sequence, 133 residues long: MRQISVISLRLNCQCTINFFVMIPNNIKEMNSNPMEKLAFQDAISLISYMYHHAEDILKSSKSLLNQILTTTKEGLSTSWDDIKKTTSGNVEYDLWQMEKQVPESEIITEKAKSGQLRSIKISCFSVDCSKPL.

This is an uncharacterized protein from Rickettsia conorii (strain ATCC VR-613 / Malish 7).